We begin with the raw amino-acid sequence, 368 residues long: Ribosomal RNA large subunit methyltransferase M (368 aa).

S-adenosyl-L-methionine contacts are provided by residues S189, 222-225, D241, D261, and D278; that span reads CPGG. Residue K307 is the Proton acceptor of the active site.

The protein belongs to the class I-like SAM-binding methyltransferase superfamily. RNA methyltransferase RlmE family. RlmM subfamily. As to quaternary structure, monomer.

The protein resides in the cytoplasm. It catalyses the reaction cytidine(2498) in 23S rRNA + S-adenosyl-L-methionine = 2'-O-methylcytidine(2498) in 23S rRNA + S-adenosyl-L-homocysteine + H(+). Its function is as follows. Catalyzes the 2'-O-methylation at nucleotide C2498 in 23S rRNA. The polypeptide is Ribosomal RNA large subunit methyltransferase M (Yersinia pestis bv. Antiqua (strain Angola)).